The chain runs to 40 residues: Photosystem II reaction center protein J (40 aa).

Residues 8-28 (IPLWIIGTVAGILVIGLVGIF) form a helical membrane-spanning segment.

Belongs to the PsbJ family. In terms of assembly, PSII is composed of 1 copy each of membrane proteins PsbA, PsbB, PsbC, PsbD, PsbE, PsbF, PsbH, PsbI, PsbJ, PsbK, PsbL, PsbM, PsbT, PsbX, PsbY, PsbZ, Psb30/Ycf12, at least 3 peripheral proteins of the oxygen-evolving complex and a large number of cofactors. It forms dimeric complexes.

It is found in the plastid. It localises to the chloroplast thylakoid membrane. Its function is as follows. One of the components of the core complex of photosystem II (PSII). PSII is a light-driven water:plastoquinone oxidoreductase that uses light energy to abstract electrons from H(2)O, generating O(2) and a proton gradient subsequently used for ATP formation. It consists of a core antenna complex that captures photons, and an electron transfer chain that converts photonic excitation into a charge separation. This is Photosystem II reaction center protein J from Spinacia oleracea (Spinach).